The sequence spans 427 residues: Steroid C26-monooxygenase (427 aa).

Position 360 (cysteine 360) interacts with heme.

Belongs to the cytochrome P450 family. Requires heme as cofactor.

The catalysed reaction is cholest-4-en-3-one + 6 reduced [2Fe-2S]-[ferredoxin] + 3 O2 + 5 H(+) = (25S)-3-oxocholest-4-en-26-oate + 6 oxidized [2Fe-2S]-[ferredoxin] + 4 H2O. The protein operates within steroid metabolism; cholesterol degradation. Functionally, involved in the utilization of cholesterol as the sole carbon and energy source by degrading the side chain. Primarily catalyzes the sequential oxidation of the terminal methyl of cholest-4-en-3-one into (25S)-26-hydroxycholest-4-en-3-one (alcohol), (25S)-26-oxocholest-4-en-3-one (aldehyde), to finally yield the carboxylic acid (25S)-3-oxocholest-4-en-26-oate. Also able to sequentially oxidize cholesterol itself, not only cholest-4-en-3-one. The chain is Steroid C26-monooxygenase from Mycolicibacterium smegmatis (strain ATCC 700084 / mc(2)155) (Mycobacterium smegmatis).